A 430-amino-acid polypeptide reads, in one-letter code: Glutamate-1-semialdehyde 2,1-aminomutase (430 aa).

Lysine 265 is modified (N6-(pyridoxal phosphate)lysine).

The protein belongs to the class-III pyridoxal-phosphate-dependent aminotransferase family. HemL subfamily. As to quaternary structure, homodimer. Pyridoxal 5'-phosphate is required as a cofactor.

The protein localises to the cytoplasm. The catalysed reaction is (S)-4-amino-5-oxopentanoate = 5-aminolevulinate. It participates in porphyrin-containing compound metabolism; protoporphyrin-IX biosynthesis; 5-aminolevulinate from L-glutamyl-tRNA(Glu): step 2/2. The chain is Glutamate-1-semialdehyde 2,1-aminomutase (hemL) from Helicobacter pylori (strain J99 / ATCC 700824) (Campylobacter pylori J99).